A 396-amino-acid chain; its full sequence is Tryptophan synthase beta chain (396 aa).

Position 88 is an N6-(pyridoxal phosphate)lysine (Lys-88).

Belongs to the TrpB family. In terms of assembly, tetramer of two alpha and two beta chains. Pyridoxal 5'-phosphate is required as a cofactor.

It catalyses the reaction (1S,2R)-1-C-(indol-3-yl)glycerol 3-phosphate + L-serine = D-glyceraldehyde 3-phosphate + L-tryptophan + H2O. It functions in the pathway amino-acid biosynthesis; L-tryptophan biosynthesis; L-tryptophan from chorismate: step 5/5. Functionally, the beta subunit is responsible for the synthesis of L-tryptophan from indole and L-serine. The sequence is that of Tryptophan synthase beta chain from Shewanella baltica (strain OS195).